Here is a 346-residue protein sequence, read N- to C-terminus: Anthranilate phosphoribosyltransferase (346 aa).

5-phospho-alpha-D-ribose 1-diphosphate contacts are provided by residues Gly88, 91-92 (GD), Thr96, 98-101 (NIST), 116-124 (KHGNRAVSS), and Ala128. Gly88 contacts anthranilate. Ser100 lines the Mg(2+) pocket. Residue Asn119 participates in anthranilate binding. Arg174 is a binding site for anthranilate. Residues Asp233 and Glu234 each contribute to the Mg(2+) site.

It belongs to the anthranilate phosphoribosyltransferase family. In terms of assembly, homodimer. It depends on Mg(2+) as a cofactor.

It catalyses the reaction N-(5-phospho-beta-D-ribosyl)anthranilate + diphosphate = 5-phospho-alpha-D-ribose 1-diphosphate + anthranilate. It participates in amino-acid biosynthesis; L-tryptophan biosynthesis; L-tryptophan from chorismate: step 2/5. Functionally, catalyzes the transfer of the phosphoribosyl group of 5-phosphorylribose-1-pyrophosphate (PRPP) to anthranilate to yield N-(5'-phosphoribosyl)-anthranilate (PRA). This Paramagnetospirillum magneticum (strain ATCC 700264 / AMB-1) (Magnetospirillum magneticum) protein is Anthranilate phosphoribosyltransferase.